Here is a 400-residue protein sequence, read N- to C-terminus: MLNSLELEGRPQDTRVVVAMSGGVDSSVTAALLKSEGYDVVGITLQLYDHGAATHRKGACCAGQDIHDARNVAERLGIPHYVLDYENRFRETVIENFADSYASGETPVPCIECNRLVKFRDLLATARELGAAALATGHYVASHRMAGGSRALLCAADADRDQSYFLFATTREQLDFLRFPLGDMTKPQTRELARSFGLSVADKHDSQDICFVPTGRYTDIISQLKPNAMVSGDIVDLDGHVIGHHDGIVHFTVGQRRGLGIASGAPLYVLSLDAANRRVVVGPREALKMHRIILRDVNWIGDGALDRAVGAGLELFVRVRSTRKPQPAWLRAIDGRYEIELVAGEEGVSPGQACVFYDGLEGQARVLGGGFIARAMARRANEIAAQNGTPAQPLAAELRG.

ATP contacts are provided by residues 19–26 (AMSGGVDS) and L45. C113 acts as the Nucleophile in catalysis. C113 and C210 are oxidised to a cystine. Residue G137 coordinates ATP. An interaction with tRNA region spans residues 160–162 (RDQ). Catalysis depends on C210, which acts as the Cysteine persulfide intermediate.

It belongs to the MnmA/TRMU family.

The protein resides in the cytoplasm. The catalysed reaction is S-sulfanyl-L-cysteinyl-[protein] + uridine(34) in tRNA + AH2 + ATP = 2-thiouridine(34) in tRNA + L-cysteinyl-[protein] + A + AMP + diphosphate + H(+). Catalyzes the 2-thiolation of uridine at the wobble position (U34) of tRNA, leading to the formation of s(2)U34. The sequence is that of tRNA-specific 2-thiouridylase MnmA from Nitrobacter hamburgensis (strain DSM 10229 / NCIMB 13809 / X14).